The following is a 503-amino-acid chain: MRINPGEITKVLEEKIKSFEEKIDLEDTGKVIQVGDGIARVYGLNKVMVSELVEFVETGVKGVAFNLEEDNVGIIVLGEYKDIKEGHTVRRLKRIIEVPVGEELLGRVVNPLGEPLDGKGPINAKNFRPIEIKAPGVIYRKPVDTPLQTGIKAIDSMIPIGRGQRELIIGDRQTGKTAIAIDTIINQKGQGVYCIYVAIGQKKSAIARIIDKLRQYGALEYTTVVVASASDPATLQYIAPYAGCAMGEYFAYSGRDALVVYDDLSKHAVAYRQLSLLMRRPPGREAYPGDIFYLHSRLLERAVRLNDKLGGGSLTALPIVETQANDISAYIPTNVISITDGQIYLEPGLFYAGQRPAINVGLSVSRVGGAAQIKAMKQVAGMLRIELAQYRELETFAQFATELDPATRAQIVRGQRLMELLKQEQYSPMPVEEQVVVIFAGVRGYLDDLPVEAVRRFEKEFLRFMHEKHQDILDDIREKKELTPETEEKLKKAIEEFKAVFRV.

170–177 (GDRQTGKT) lines the ATP pocket.

This sequence belongs to the ATPase alpha/beta chains family. In terms of assembly, F-type ATPases have 2 components, CF(1) - the catalytic core - and CF(0) - the membrane proton channel. CF(1) has five subunits: alpha(3), beta(3), gamma(1), delta(1), epsilon(1). CF(0) has three main subunits: a(1), b(2) and c(9-12). The alpha and beta chains form an alternating ring which encloses part of the gamma chain. CF(1) is attached to CF(0) by a central stalk formed by the gamma and epsilon chains, while a peripheral stalk is formed by the delta and b chains.

The protein localises to the cell inner membrane. The catalysed reaction is ATP + H2O + 4 H(+)(in) = ADP + phosphate + 5 H(+)(out). Its function is as follows. Produces ATP from ADP in the presence of a proton gradient across the membrane. The alpha chain is a regulatory subunit. The sequence is that of ATP synthase subunit alpha from Thermotoga neapolitana (strain ATCC 49049 / DSM 4359 / NBRC 107923 / NS-E).